Reading from the N-terminus, the 614-residue chain is tRNA uridine 5-carboxymethylaminomethyl modification enzyme MnmG (614 aa).

10–15 (GAGHAG) lines the FAD pocket. Residue 271–285 (GPRYCPSIEDKIVKF) participates in NAD(+) binding.

This sequence belongs to the MnmG family. In terms of assembly, homodimer. Heterotetramer of two MnmE and two MnmG subunits. FAD is required as a cofactor.

It localises to the cytoplasm. Its function is as follows. NAD-binding protein involved in the addition of a carboxymethylaminomethyl (cmnm) group at the wobble position (U34) of certain tRNAs, forming tRNA-cmnm(5)s(2)U34. The protein is tRNA uridine 5-carboxymethylaminomethyl modification enzyme MnmG of Ureaplasma parvum serovar 3 (strain ATCC 27815 / 27 / NCTC 11736).